The sequence spans 75 residues: Veswaprin-b (75 aa).

The N-terminal stretch at 1–24 (MSSGGLLLLLGLLTLWAELTPISG) is a signal peptide. Positions 23 to 42 (SGQDRPKKPGLRPPRPQKPP) are disordered. In terms of domain architecture, WAP; atypical spans 27-72 (RPKKPGLRPPRPQKPPCVRECKNDWRCPGEQKCCRYGCIYECRDPI). Intrachain disulfides connect C43–C64, C47–C59, and C53–C68.

The protein belongs to the venom waprin family. In terms of tissue distribution, expressed by the venom gland.

It is found in the secreted. In terms of biological role, damages membranes of susceptible bacteria. Has no hemolytic activity. Not toxic to mice. Does not inhibit the proteinases elastase and cathepsin G. This Demansia vestigiata (Lesser black whip snake) protein is Veswaprin-b.